The following is a 341-amino-acid chain: Dihydroorotate dehydrogenase (quinone) (341 aa).

FMN is bound by residues Ala-61–Lys-65 and Thr-85. Residue Lys-65 coordinates substrate. Asn-110–Phe-114 serves as a coordination point for substrate. Residues Asn-138 and Asn-171 each coordinate FMN. Asn-171 contributes to the substrate binding site. The Nucleophile role is filled by Ser-174. Substrate is bound at residue Asn-176. FMN contacts are provided by Lys-216 and Thr-244. Asn-245–Thr-246 provides a ligand contact to substrate. FMN contacts are provided by residues Gly-267, Gly-296, and Tyr-317–Ser-318.

The protein belongs to the dihydroorotate dehydrogenase family. Type 2 subfamily. Monomer. FMN serves as cofactor.

Its subcellular location is the cell membrane. It carries out the reaction (S)-dihydroorotate + a quinone = orotate + a quinol. Its pathway is pyrimidine metabolism; UMP biosynthesis via de novo pathway; orotate from (S)-dihydroorotate (quinone route): step 1/1. In terms of biological role, catalyzes the conversion of dihydroorotate to orotate with quinone as electron acceptor. The sequence is that of Dihydroorotate dehydrogenase (quinone) from Pseudomonas putida (strain W619).